Consider the following 414-residue polypeptide: 2,3-bisphosphoglycerate-independent phosphoglycerate mutase (414 aa).

This sequence belongs to the BPG-independent phosphoglycerate mutase family. A-PGAM subfamily.

It catalyses the reaction (2R)-2-phosphoglycerate = (2R)-3-phosphoglycerate. Its pathway is carbohydrate degradation; glycolysis; pyruvate from D-glyceraldehyde 3-phosphate: step 3/5. Functionally, catalyzes the interconversion of 2-phosphoglycerate and 3-phosphoglycerate. This chain is 2,3-bisphosphoglycerate-independent phosphoglycerate mutase, found in Saccharolobus islandicus (strain L.S.2.15 / Lassen #1) (Sulfolobus islandicus).